The chain runs to 1179 residues: Serine/threonine-protein kinase pakG (1179 aa).

The stretch at 12-53 (SKTNEDIELIKQKLKEDRELLEKERAQFEEERKIIFESLNKV) forms a coiled coil. Residues 111-124 (IGTPFNVQHKVHVD) form the CRIB domain. The 252-residue stretch at 139 to 390 (FLIDCILGTG…AIELLTHPFL (252 aa)) folds into the Protein kinase domain. ATP contacts are provided by residues 145 to 153 (LGTGSYGTV) and lysine 168. Residue aspartate 257 is the Proton acceptor of the active site. 4 disordered regions span residues 414–469 (KKKK…SSLD), 589–631 (IGNS…NNNN), 705–1086 (SSSS…PITL), and 1121–1179 (TEIN…SPKK). A coiled-coil region spans residues 621–668 (NNNNNNNNNNNEFLINQIKKELILDFNENMKQYINQQLTNLKEEMLKE). Composition is skewed to low complexity over residues 705-723 (SSSSSSSFLNSSPSSSNSS) and 743-761 (LPPSQQSTPVTTTTTTSSP). Over residues 762–776 (SPSPSPSPSPSPSSP) the composition is skewed to pro residues. Low complexity-rich tracts occupy residues 777–788 (LPSSSTSTVNTP) and 812–833 (NNNNTNNNNNNNNSNNNNNNNN). The span at 834 to 857 (VIQSPKLNNRPLSPTTPTKQFNNR) shows a compositional bias: polar residues. Low complexity predominate over residues 864–891 (FNNRPPSPSKFNNRPPSPSNRPLSPKNS). A compositionally biased stretch (polar residues) spans 892-946 (YNSLEKSNNGSISNNRPLSPKNSLEKSTTQNNTSSEDISTTTVTVTSEQGGTPIT). Positions 954 to 963 (RPKPSPPPIP) are enriched in pro residues. 3 stretches are compositionally biased toward low complexity: residues 964–997 (MNKSSPKRAPSPSSNRRLSSSFTAQSSTASTIAA), 1024–1046 (TTITSSTNSPIKPLSPLNKSPNS), and 1053–1077 (ITTSNISNNSNINNNNNNNSNSSSN). The segment covering 1121–1135 (TEINLPSSSPSTPQK) has biased composition (polar residues). The span at 1137–1158 (NTPSSIPTTPTTPTTNGGSVSS) shows a compositional bias: low complexity.

The protein belongs to the protein kinase superfamily. STE Ser/Thr protein kinase family. STE20 subfamily. Mg(2+) serves as cofactor.

It carries out the reaction L-seryl-[protein] + ATP = O-phospho-L-seryl-[protein] + ADP + H(+). The enzyme catalyses L-threonyl-[protein] + ATP = O-phospho-L-threonyl-[protein] + ADP + H(+). This chain is Serine/threonine-protein kinase pakG, found in Dictyostelium discoideum (Social amoeba).